The primary structure comprises 591 residues: L-fucose isomerase (591 aa).

Catalysis depends on proton acceptor residues Glu337 and Asp361. Mn(2+) is bound by residues Glu337, Asp361, and His528.

Belongs to the L-fucose isomerase family. In terms of assembly, homohexamer. The cofactor is Mn(2+).

It localises to the cytoplasm. The catalysed reaction is L-fucose = L-fuculose. It functions in the pathway carbohydrate degradation; L-fucose degradation; L-lactaldehyde and glycerone phosphate from L-fucose: step 1/3. Its function is as follows. Converts the aldose L-fucose into the corresponding ketose L-fuculose. This chain is L-fucose isomerase, found in Escherichia coli (strain UTI89 / UPEC).